Here is a 440-residue protein sequence, read N- to C-terminus: Adenylyltransferase and sulfurtransferase UBA4 (440 aa).

Residue methionine 1 is modified to N-acetylmethionine. ATP-binding positions include glycine 77, aspartate 98, 105–109, lysine 122, and 166–167; these read SNLHR and DS. 2 residues coordinate Zn(2+): cysteine 208 and cysteine 211. Residue cysteine 225 is the Glycyl thioester intermediate; for adenylyltransferase activity of the active site. The Zn(2+) site is built by cysteine 286 and cysteine 289. Position 326 is a phosphoserine (serine 326). In terms of domain architecture, Rhodanese spans 339-438; it reads FLAKHIFLDV…YIDDIDQTIP (100 aa). Cysteine 397 (cysteine persulfide intermediate; for sulfurtransferase activity) is an active-site residue.

The protein in the N-terminal section; belongs to the HesA/MoeB/ThiF family. UBA4 subfamily. Zn(2+) serves as cofactor.

It is found in the cytoplasm. The protein resides in the cytosol. It functions in the pathway tRNA modification; 5-methoxycarbonylmethyl-2-thiouridine-tRNA biosynthesis. Plays a central role in 2-thiolation of mcm(5)S(2)U at tRNA wobble positions of cytosolic tRNA(Lys), tRNA(Glu) and tRNA(Gln). Acts by mediating the C-terminal thiocarboxylation of sulfur carrier URM1. Its N-terminus first activates URM1 as acyl-adenylate (-COAMP), then the persulfide sulfur on the catalytic cysteine is transferred to URM1 to form thiocarboxylation (-COSH) of its C-terminus. The reaction probably involves hydrogen sulfide that is generated from the persulfide intermediate and that acts as a nucleophile towards URM1. Subsequently, a transient disulfide bond is formed. Does not use thiosulfate as sulfur donor; NFS1 probably acting as a sulfur donor for thiocarboxylation reactions. Prior mcm(5) tRNA modification by the elongator complex is required for 2-thiolation. May also be involved in protein urmylation. This Saccharomyces cerevisiae (strain YJM789) (Baker's yeast) protein is Adenylyltransferase and sulfurtransferase UBA4.